Consider the following 125-residue polypeptide: 17 kDa gas vesicle protein (125 aa).

The protein belongs to the gas vesicle GvpC family.

The protein resides in the gas vesicle. In terms of biological role, gas vesicles (GV) are hollow, gas filled proteinaceous nanostructures. During planktonic growth they allow positioning of the organism at a favorable depth for light or nutrient acquisition. The protein is 17 kDa gas vesicle protein of Dactylococcopsis salina (strain PCC 8305) (Myxobactron salinum).